Here is a 182-residue protein sequence, read N- to C-terminus: NAD(P)H-quinone oxidoreductase subunit I, chloroplastic (182 aa).

2 4Fe-4S ferredoxin-type domains span residues 55-84 (GRIHFEFDKCIACEVCVRVCPIDLPVVDWK) and 95-124 (LNYSIDFGICIFCGNCVEYCPTNCLSMTEE). The [4Fe-4S] cluster site is built by C64, C67, C70, C74, C104, C107, C110, and C114.

This sequence belongs to the complex I 23 kDa subunit family. NDH is composed of at least 16 different subunits, 5 of which are encoded in the nucleus. [4Fe-4S] cluster serves as cofactor.

The protein localises to the plastid. The protein resides in the chloroplast thylakoid membrane. The enzyme catalyses a plastoquinone + NADH + (n+1) H(+)(in) = a plastoquinol + NAD(+) + n H(+)(out). It carries out the reaction a plastoquinone + NADPH + (n+1) H(+)(in) = a plastoquinol + NADP(+) + n H(+)(out). In terms of biological role, NDH shuttles electrons from NAD(P)H:plastoquinone, via FMN and iron-sulfur (Fe-S) centers, to quinones in the photosynthetic chain and possibly in a chloroplast respiratory chain. The immediate electron acceptor for the enzyme in this species is believed to be plastoquinone. Couples the redox reaction to proton translocation, and thus conserves the redox energy in a proton gradient. This chain is NAD(P)H-quinone oxidoreductase subunit I, chloroplastic, found in Buxus microphylla (Littleleaf boxwood).